The sequence spans 393 residues: Protein DDI1 homolog 2 (393 aa).

Residues 1–81 (MLITVYCVRR…VILRQKEAPE (81 aa)) form the Ubiquitin-like domain. The segment at 82-127 (TRPAAPFPGLDFSTIAVPGASSQPDPSQPQAPPPPPDTSSFPQGLD) is disordered. The span at 107–118 (PSQPQAPPPPPD) shows a compositional bias: pro residues. Asp246 is an active-site residue. Residues 370-389 (EEIADRELAEVLQKSADEAD) carry the Ubiquitin-binding motif.

This sequence belongs to the DDI1 family. As to quaternary structure, homodimer.

It localises to the cytoplasm. The protein resides in the cytosol. The protein localises to the chromosome. Functionally, aspartic protease that mediates the cleavage of NFE2L1/NRF1 at 'Leu-104', thereby promoting release of NFE2L1/NRF1 from the endoplasmic reticulum membrane. Ubiquitination of NFE2L1/NRF1 is a prerequisite for cleavage, suggesting that DDI2 specifically recognizes and binds ubiquitinated NFE2L1/NRF1. Seems to act as a proteasomal shuttle which links the proteasome and replication fork proteins like RTF2. Required for cellular survival following replication stress. This Xenopus laevis (African clawed frog) protein is Protein DDI1 homolog 2 (ddi2).